A 473-amino-acid chain; its full sequence is Photosystem II CP43 reaction center protein (473 aa).

The propeptide occupies 1–14 (MKILYSQRRFYPVE). T15 is subject to N-acetylthreonine. Residue T15 is modified to Phosphothreonine. 5 helical membrane-spanning segments follow: residues 69 to 93 (LFEV…PHLA), 134 to 155 (LIGP…KDKN), 178 to 200 (KALY…RKIT), 255 to 275 (KPFA…LSYS), and 291 to 312 (WFNN…ASQA). E367 provides a ligand contact to [CaMn4O5] cluster. A helical transmembrane segment spans residues 447–471 (RARAAAAGFEKGIDRDFEPVLSMTP).

This sequence belongs to the PsbB/PsbC family. PsbC subfamily. PSII is composed of 1 copy each of membrane proteins PsbA, PsbB, PsbC, PsbD, PsbE, PsbF, PsbH, PsbI, PsbJ, PsbK, PsbL, PsbM, PsbT, PsbX, PsbY, PsbZ, Psb30/Ycf12, at least 3 peripheral proteins of the oxygen-evolving complex and a large number of cofactors. It forms dimeric complexes. Binds multiple chlorophylls and provides some of the ligands for the Ca-4Mn-5O cluster of the oxygen-evolving complex. It may also provide a ligand for a Cl- that is required for oxygen evolution. PSII binds additional chlorophylls, carotenoids and specific lipids. serves as cofactor. Post-translationally, phosphorylated on threonine residue(s).

The protein localises to the plastid. Its subcellular location is the chloroplast thylakoid membrane. In terms of biological role, one of the components of the core complex of photosystem II (PSII). It binds chlorophyll and helps catalyze the primary light-induced photochemical processes of PSII. PSII is a light-driven water:plastoquinone oxidoreductase, using light energy to abstract electrons from H(2)O, generating O(2) and a proton gradient subsequently used for ATP formation. The sequence is that of Photosystem II CP43 reaction center protein from Marchantia polymorpha (Common liverwort).